Consider the following 407-residue polypeptide: Phosphopentomutase (407 aa).

The Mn(2+) site is built by Asp10, Asp306, His311, Asp347, His348, and His359.

The protein belongs to the phosphopentomutase family. Mn(2+) serves as cofactor.

Its subcellular location is the cytoplasm. It catalyses the reaction 2-deoxy-alpha-D-ribose 1-phosphate = 2-deoxy-D-ribose 5-phosphate. The catalysed reaction is alpha-D-ribose 1-phosphate = D-ribose 5-phosphate. The protein operates within carbohydrate degradation; 2-deoxy-D-ribose 1-phosphate degradation; D-glyceraldehyde 3-phosphate and acetaldehyde from 2-deoxy-alpha-D-ribose 1-phosphate: step 1/2. Its function is as follows. Isomerase that catalyzes the conversion of deoxy-ribose 1-phosphate (dRib-1-P) and ribose 1-phosphate (Rib-1-P) to deoxy-ribose 5-phosphate (dRib-5-P) and ribose 5-phosphate (Rib-5-P), respectively. The sequence is that of Phosphopentomutase from Salmonella arizonae (strain ATCC BAA-731 / CDC346-86 / RSK2980).